The primary structure comprises 70 residues: Small ribosomal subunit protein bS21 (70 aa).

This sequence belongs to the bacterial ribosomal protein bS21 family.

In Nautilia profundicola (strain ATCC BAA-1463 / DSM 18972 / AmH), this protein is Small ribosomal subunit protein bS21.